A 328-amino-acid chain; its full sequence is Glyoxylate reductase/hydroxypyruvate reductase (328 aa).

Ser-36 is modified (phosphoserine). 83–84 (VG) provides a ligand contact to substrate. Residues 162 to 164 (GRI), 185 to 188 (RQPR), Ser-217, and Ile-243 contribute to the NADP(+) site. Positions 245 and 269 each coordinate substrate. Ser-272 bears the Phosphoserine mark. Residue His-293 is the Proton donor of the active site. Position 293–296 (293–296 (HIGS)) interacts with substrate. Gly-295 is a binding site for NADP(+). A Phosphothreonine modification is found at Thr-298.

Belongs to the D-isomer specific 2-hydroxyacid dehydrogenase family. As to quaternary structure, homodimer. In terms of tissue distribution, ubiquitous. Most abundantly expressed in the liver.

The catalysed reaction is glycolate + NADP(+) = glyoxylate + NADPH + H(+). It catalyses the reaction (R)-glycerate + NAD(+) = 3-hydroxypyruvate + NADH + H(+). The enzyme catalyses (R)-glycerate + NADP(+) = 3-hydroxypyruvate + NADPH + H(+). Functionally, enzyme with hydroxy-pyruvate reductase, glyoxylate reductase and D-glycerate dehydrogenase enzymatic activities. Reduces hydroxypyruvate to D-glycerate, glyoxylate to glycolate, oxidizes D-glycerate to hydroxypyruvate. The polypeptide is Glyoxylate reductase/hydroxypyruvate reductase (GRHPR) (Homo sapiens (Human)).